The following is a 214-amino-acid chain: Adenylate kinase (214 aa).

An ATP-binding site is contributed by 10–15 (GAGKGT). The NMP stretch occupies residues 30–59 (STGDMLRAAVKAGTPLGLEAKKVMDAGQLV). Residues Thr31, Arg36, 57–59 (QLV), 85–88 (GFPR), and Gln92 contribute to the AMP site. Residues 122 to 159 (GRRVHSGSGRVYHVVFNPPKVEGKDDVTGEDLSIRPDD) are LID. ATP contacts are provided by residues Arg123 and 132–133 (VY). 2 residues coordinate AMP: Arg156 and Arg167. Gln200 serves as a coordination point for ATP.

Belongs to the adenylate kinase family. Monomer.

It localises to the cytoplasm. The enzyme catalyses AMP + ATP = 2 ADP. The protein operates within purine metabolism; AMP biosynthesis via salvage pathway; AMP from ADP: step 1/1. Functionally, catalyzes the reversible transfer of the terminal phosphate group between ATP and AMP. Plays an important role in cellular energy homeostasis and in adenine nucleotide metabolism. This is Adenylate kinase from Shewanella denitrificans (strain OS217 / ATCC BAA-1090 / DSM 15013).